The primary structure comprises 526 residues: ATP synthase subunit alpha (526 aa).

171–178 (GDRQTGKT) lines the ATP pocket.

Belongs to the ATPase alpha/beta chains family. As to quaternary structure, F-type ATPases have 2 components, CF(1) - the catalytic core - and CF(0) - the membrane proton channel. CF(1) has five subunits: alpha(3), beta(3), gamma(1), delta(1), epsilon(1). CF(0) has three main subunits: a(1), b(2) and c(9-12). The alpha and beta chains form an alternating ring which encloses part of the gamma chain. CF(1) is attached to CF(0) by a central stalk formed by the gamma and epsilon chains, while a peripheral stalk is formed by the delta and b chains.

Its subcellular location is the cell inner membrane. The enzyme catalyses ATP + H2O + 4 H(+)(in) = ADP + phosphate + 5 H(+)(out). In terms of biological role, produces ATP from ADP in the presence of a proton gradient across the membrane. The alpha chain is a regulatory subunit. In Cytophaga hutchinsonii (strain ATCC 33406 / DSM 1761 / CIP 103989 / NBRC 15051 / NCIMB 9469 / D465), this protein is ATP synthase subunit alpha.